The following is a 415-amino-acid chain: L-cysteine:1D-myo-inositol 2-amino-2-deoxy-alpha-D-glucopyranoside ligase (415 aa).

Cys-43 contributes to the Zn(2+) binding site. L-cysteinyl-5'-AMP-binding positions include 43–46 (CGIT), Thr-58, and 81–83 (NVT). Residues 45–55 (ITPYDATHLGH) carry the 'HIGH' region motif. The short motif at 188–193 (ERGGDP) is the 'ERGGDP' region element. Trp-229 lines the L-cysteinyl-5'-AMP pocket. Position 233 (Cys-233) interacts with Zn(2+). L-cysteinyl-5'-AMP is bound at residue 251–253 (GSD). His-258 serves as a coordination point for Zn(2+). Residue Val-285 coordinates L-cysteinyl-5'-AMP. Positions 291-295 (KMSKS) match the 'KMSKS' region motif.

The protein belongs to the class-I aminoacyl-tRNA synthetase family. MshC subfamily. In terms of assembly, monomer. Zn(2+) serves as cofactor.

The enzyme catalyses 1D-myo-inositol 2-amino-2-deoxy-alpha-D-glucopyranoside + L-cysteine + ATP = 1D-myo-inositol 2-(L-cysteinylamino)-2-deoxy-alpha-D-glucopyranoside + AMP + diphosphate + H(+). Functionally, catalyzes the ATP-dependent condensation of GlcN-Ins and L-cysteine to form L-Cys-GlcN-Ins. The chain is L-cysteine:1D-myo-inositol 2-amino-2-deoxy-alpha-D-glucopyranoside ligase from Cellulomonas flavigena (strain ATCC 482 / DSM 20109 / BCRC 11376 / JCM 18109 / NBRC 3775 / NCIMB 8073 / NRS 134).